The primary structure comprises 505 residues: Deoxyguanosinetriphosphate triphosphohydrolase (505 aa).

The 208-residue stretch at R66–C273 folds into the HD domain.

The protein belongs to the dGTPase family. Type 1 subfamily. Homotetramer. It depends on Mg(2+) as a cofactor.

The catalysed reaction is dGTP + H2O = 2'-deoxyguanosine + triphosphate + H(+). DGTPase preferentially hydrolyzes dGTP over the other canonical NTPs. The chain is Deoxyguanosinetriphosphate triphosphohydrolase from Shigella boydii serotype 4 (strain Sb227).